Reading from the N-terminus, the 607-residue chain is MILLAFSSGRRLDFVHRSGVFFFQTLLWILCATVCGTEQYFNVEVWLQKYGYLPPTDPRMSVLRSAETMQSALAAMQQFYGINMTGKVDRNTIDWMKKPRCGVPDQTRGSSKFNIRRKRYALTGQKWQHKHITYSIKNVTPKVGDPETRRAIRRAFDVWQNVTPLTFEEVPYSELENGKRDVDITIIFASGFHGDRSPFDGEGGFLAHAYFPGPGIGGDTHFDSDEPWTLGNPNHDGNDLFLVAVHELGHALGLEHSNDPTAIMAPFYQYMETDNFKLPNDDLQGIQKIYGPPDKIPPPTRPLPTVPPHRSVPPADPRKNDRPKPPRPPTGRPSYPGAKPNICDGNFNTLAILRREMFVFKDQWFWRVRNNRVMDGYPMQITYFWRGLPPSIDAVYENSDGNFVFFKGNKYWVFKDTTLQPGYPHDLITLGNGIPPHGIDSAIWWEDVGKTYFFKGDRYWRYSEEMKTMDPGYPKPITIWKGIPESPQGAFVHKENGFTYFYKGKEYWKFNNQILKVEPGYPRSILKDFMGCDGPTDRDKEGLSPPDDVDIVIKLDNTASTVKAIAIVIPCILALCLLVLVYTVFQFKRKGTPRHILYCKRSMQEWV.

Residues 1-31 (MILLAFSSGRRLDFVHRSGVFFFQTLLWILC) form the signal peptide. Residues 32–119 (ATVCGTEQYF…SSKFNIRRKR (88 aa)) constitute a propeptide that is removed on maturation. The N-linked (GlcNAc...) asparagine glycan is linked to asparagine 83. Residues 99–106 (PRCGVPDQ) carry the Cysteine switch motif. Cysteine 101 provides a ligand contact to Zn(2+). The Extracellular segment spans residues 120–564 (YALTGQKWQH…LDNTASTVKA (445 aa)). Aspartate 183 contacts Ca(2+). Residues histidine 193 and aspartate 195 each coordinate Zn(2+). 4 residues coordinate Ca(2+): aspartate 200, glycine 201, glycine 203, and phenylalanine 205. Histidine 208 is a Zn(2+) binding site. Positions 215, 217, and 219 each coordinate Ca(2+). Histidine 221 is a binding site for Zn(2+). Ca(2+) is bound by residues aspartate 223 and glutamate 226. Histidine 246 serves as a coordination point for Zn(2+). Residue glutamate 247 is part of the active site. Zn(2+) contacts are provided by histidine 250 and histidine 256. A disordered region spans residues 281 to 340 (DDLQGIQKIYGPPDKIPPPTRPLPTVPPHRSVPPADPRKNDRPKPPRPPTGRPSYPGAKP). Positions 294–315 (DKIPPPTRPLPTVPPHRSVPPA) are enriched in pro residues. Hemopexin repeat units follow at residues 340 to 388 (PNIC…WRGL), 389 to 434 (PPSI…GNGI), 436 to 484 (PHGI…KGIP), and 485 to 532 (ESPQ…FMGC). Cysteines 343 and 532 form a disulfide. A helical membrane pass occupies residues 565 to 585 (IAIVIPCILALCLLVLVYTVF). Residues 586-607 (QFKRKGTPRHILYCKRSMQEWV) lie on the Cytoplasmic side of the membrane.

The protein belongs to the peptidase M10A family. Interacts with CSPG4 through CSPG4 chondroitin sulfate glycosaminoglycan. The cofactor is Zn(2+). It depends on Ca(2+) as a cofactor. Post-translationally, the precursor is cleaved by a furin endopeptidase. Strongly expressed in the lung, brain and smooth muscle cells. Weakly detectable in the spleen and liver and indetectable in the heart, skeletal muscle and kidney.

It localises to the cell membrane. Its subcellular location is the secreted. It is found in the extracellular space. The protein resides in the extracellular matrix. Its function is as follows. Endopeptidase that degrades various components of the extracellular matrix, such as collagen type III and fibronectin. Activates progelatinase A. Involved in the matrix remodeling of blood vessels. The short isoform efficiently converts progelatinase A to the intermediate form but not to the mature one. It has no effect on type I, II, IV and V collagen. However, upon interaction with CSPG4, it may be involved in degradation and invasion of type I collagen by melanoma cells. The polypeptide is Matrix metalloproteinase-16 (Mmp16) (Rattus norvegicus (Rat)).